The chain runs to 431 residues: Tol-Pal system protein TolB (431 aa).

The signal sequence occupies residues 1–26 (MRLMTKLGFRALVASCLIAAGAAANA). The tract at residues 411-431 (PQILSVQGGSVREPSWGPFMQ) is disordered.

Belongs to the TolB family. The Tol-Pal system is composed of five core proteins: the inner membrane proteins TolA, TolQ and TolR, the periplasmic protein TolB and the outer membrane protein Pal. They form a network linking the inner and outer membranes and the peptidoglycan layer.

It localises to the periplasm. Functionally, part of the Tol-Pal system, which plays a role in outer membrane invagination during cell division and is important for maintaining outer membrane integrity. This chain is Tol-Pal system protein TolB, found in Burkholderia ambifaria (strain ATCC BAA-244 / DSM 16087 / CCUG 44356 / LMG 19182 / AMMD) (Burkholderia cepacia (strain AMMD)).